The primary structure comprises 227 residues: Lysosomal-associated transmembrane protein 4B (227 aa).

4 consecutive transmembrane segments (helical) span residues 26–46 (ILLG…LLSA), 72–92 (MCIA…ATYG), 100–120 (WIIP…LVAI), and 153–173 (CLVL…GYLI). The segment at 205–222 (PPYDDATAVTGTAKEPPP) is required for NEDD4 interaction.

It belongs to the LAPTM4/LAPTM5 transporter family. As to quaternary structure, homooligomer; upon reaching the lysosomes. Interacts with MCOLN1. Interacts with NEDD4; may play a role in the lysosomal sorting of LAPTM4B; enhances HGS association with NEDD4; mediates inhibition of EGFR degradation. Interacts with PIP5K1C; promotes SNX5 association with LAPTM4B; kinase activity of PIP5K1C is required; interaction is regulated by phosphatidylinositol 4,5-bisphosphate generated by PIP5K1C. Interacts with HGS; promotes HGS ubiquitination. Interacts with SNX5. Interacts with SLC3A2 and SLC7A5; recruits SLC3A2 and SLC7A5 to lysosomes to promote leucine uptake into these organelles and is required for mTORC1 activation. Interacts with LRRC32; decreases TGFB1 production in regulatory T cells. Interacts with BECN1; competes with EGFR for LAPTM4B binding; regulates EGFR activity. Interacts with EGFR; positively correlates with EGFR activation. Post-translationally, undergoes proteolytic cleavage following delivery to the lysosomes. In terms of processing, ubiquitinated by NEDD4.

It is found in the endomembrane system. The protein localises to the late endosome membrane. The protein resides in the cell membrane. It localises to the cell projection. Its subcellular location is the lysosome membrane. It is found in the endosome membrane. The protein localises to the endosome. The protein resides in the multivesicular body membrane. It localises to the multivesicular body lumen. Functionally, required for optimal lysosomal function. Blocks EGF-stimulated EGFR intraluminal sorting and degradation. Conversely by binding with the phosphatidylinositol 4,5-bisphosphate, regulates its PIP5K1C interaction, inhibits HGS ubiquitination and relieves LAPTM4B inhibition of EGFR degradation. Recruits SLC3A2 and SLC7A5 (the Leu transporter) to the lysosome, promoting entry of leucine and other essential amino acid (EAA) into the lysosome, stimulating activation of proton-transporting vacuolar (V)-ATPase protein pump (V-ATPase) and hence mTORC1 activation. Plays a role as negative regulator of TGFB1 production in regulatory T cells. Binds ceramide and facilitates its exit from late endosome in order to control cell death pathways. This Rattus norvegicus (Rat) protein is Lysosomal-associated transmembrane protein 4B.